The primary structure comprises 269 residues: GVSGSCNIDVVCPEGNGHRDVIRSVAAYSKQGTMWCTGSLVNNSANDKKMYFLTANHCGMTTAAIASSMVVYWNYQNSTCRAPGSSSSGANGDGSLAQSQTGAVVRATNAASDFTLLELNTAANPAYNLFWAGWDRRDQNFAGATAIHHPNVAEKRISHSTVATEISGYNGATGTSHLHVFWQASGGVTEPGSSGSPIYSPEKRVLGQLHGGPSSCSATGADRSDYYGRVFTSWTGGGTSATRLSDWLDAAGTGAQFIDGLDSTGTPPV.

3 cysteine pairs are disulfide-bonded: cysteine 6-cysteine 216, cysteine 12-cysteine 80, and cysteine 36-cysteine 58. Residues histidine 57, aspartate 113, and serine 194 each act as charge relay system in the active site.

This sequence belongs to the peptidase S1 family.

The protein resides in the secreted. It carries out the reaction Preferential cleavage: Lys-|-Xaa, including Lys-|-Pro.. Its function is as follows. Highly specific endopeptidase that hydrolyzes lysyl bonds including the Lys-Pro bond. The chain is Lysyl endopeptidase from Lysobacter enzymogenes.